A 342-amino-acid polypeptide reads, in one-letter code: Methionyl-tRNA formyltransferase (342 aa).

(6S)-5,6,7,8-tetrahydrofolate is bound at residue 108 to 111 (SLLP).

The protein belongs to the Fmt family.

It catalyses the reaction L-methionyl-tRNA(fMet) + (6R)-10-formyltetrahydrofolate = N-formyl-L-methionyl-tRNA(fMet) + (6S)-5,6,7,8-tetrahydrofolate + H(+). Attaches a formyl group to the free amino group of methionyl-tRNA(fMet). The formyl group appears to play a dual role in the initiator identity of N-formylmethionyl-tRNA by promoting its recognition by IF2 and preventing the misappropriation of this tRNA by the elongation apparatus. In Prochlorococcus marinus (strain MIT 9313), this protein is Methionyl-tRNA formyltransferase.